A 438-amino-acid chain; its full sequence is Trigger factor (438 aa).

The region spanning D160–P245 is the PPIase FKBP-type domain.

It belongs to the FKBP-type PPIase family. Tig subfamily.

The protein resides in the cytoplasm. The catalysed reaction is [protein]-peptidylproline (omega=180) = [protein]-peptidylproline (omega=0). Involved in protein export. Acts as a chaperone by maintaining the newly synthesized protein in an open conformation. Functions as a peptidyl-prolyl cis-trans isomerase. The chain is Trigger factor from Francisella tularensis subsp. holarctica (strain OSU18).